We begin with the raw amino-acid sequence, 91 residues long: Elongation factor 1-beta (91 aa).

It belongs to the EF-1-beta/EF-1-delta family.

In terms of biological role, promotes the exchange of GDP for GTP in EF-1-alpha/GDP, thus allowing the regeneration of EF-1-alpha/GTP that could then be used to form the ternary complex EF-1-alpha/GTP/AAtRNA. The sequence is that of Elongation factor 1-beta from Saccharolobus islandicus (strain Y.N.15.51 / Yellowstone #2) (Sulfolobus islandicus).